The primary structure comprises 352 residues: UDP-N-acetylglucosamine--N-acetylmuramyl-(pentapeptide) pyrophosphoryl-undecaprenol N-acetylglucosamine transferase 2 (352 aa).

Residues 11-13 (SAG), Arg-164, Ser-194, and Gln-289 contribute to the UDP-N-acetyl-alpha-D-glucosamine site.

The protein belongs to the glycosyltransferase 28 family. MurG subfamily.

Its subcellular location is the cell membrane. It catalyses the reaction di-trans,octa-cis-undecaprenyl diphospho-N-acetyl-alpha-D-muramoyl-L-alanyl-D-glutamyl-meso-2,6-diaminopimeloyl-D-alanyl-D-alanine + UDP-N-acetyl-alpha-D-glucosamine = di-trans,octa-cis-undecaprenyl diphospho-[N-acetyl-alpha-D-glucosaminyl-(1-&gt;4)]-N-acetyl-alpha-D-muramoyl-L-alanyl-D-glutamyl-meso-2,6-diaminopimeloyl-D-alanyl-D-alanine + UDP + H(+). It participates in cell wall biogenesis; peptidoglycan biosynthesis. Cell wall formation. Catalyzes the transfer of a GlcNAc subunit on undecaprenyl-pyrophosphoryl-MurNAc-pentapeptide (lipid intermediate I) to form undecaprenyl-pyrophosphoryl-MurNAc-(pentapeptide)GlcNAc (lipid intermediate II). This is UDP-N-acetylglucosamine--N-acetylmuramyl-(pentapeptide) pyrophosphoryl-undecaprenol N-acetylglucosamine transferase 2 from Bacillus thuringiensis subsp. konkukian (strain 97-27).